The chain runs to 180 residues: Ribosome maturation factor RimM (180 aa).

The 74-residue stretch at 104–177 folds into the PRC barrel domain; it reads EGEFHLLDLV…WLLLTPPPGL (74 aa).

This sequence belongs to the RimM family. As to quaternary structure, binds ribosomal protein uS19.

It localises to the cytoplasm. In terms of biological role, an accessory protein needed during the final step in the assembly of 30S ribosomal subunit, possibly for assembly of the head region. Essential for efficient processing of 16S rRNA. May be needed both before and after RbfA during the maturation of 16S rRNA. It has affinity for free ribosomal 30S subunits but not for 70S ribosomes. In Synechococcus sp. (strain CC9902), this protein is Ribosome maturation factor RimM.